Reading from the N-terminus, the 83-residue chain is Mitotic-spindle organizing protein 1 (83 aa).

It belongs to the MOZART1 family. Part of the gamma-tubulin complex.

It is found in the cytoplasm. Its subcellular location is the cytoskeleton. It localises to the microtubule organizing center. The protein localises to the spindle pole body. In terms of biological role, required for gamma-tubulin complex recruitment to the microtubule organizing center (MTOC). The chain is Mitotic-spindle organizing protein 1 from Botryotinia fuckeliana (strain B05.10) (Noble rot fungus).